The primary structure comprises 459 residues: MRNDPFQRLGLDREVLTVSQLNQRARLLLEDVFPQVWVEGELSNLARPASGHVYFTLKDSNAQIRCALFRQNALRVRQALRDGLAVKVRGKISLFEGRGDYQLIADTVEPAGDGALRLAFEALKEKLAGEGLFASERKRPLPAHPRRIGIVSSPSGAVIRDIISVFRRRAPQVELTLVPTAVQGREAVAQIVRALQLADRQGFDALILARGGGSLEDLWCFNEEAVARAVAACATPIVSAVGHETDVSISDFVADVRAPTPSAAAELLAPNAGDLQQRLDGLRRRLVLRMRDQLLRERLRLEGVARRLRHPGERLRQQAQRLDDLDMRLRRAFERQLAVRHERLVRLETRLAAQHPGRTLALLRQKLDSLAARLPRAAREVLKDRRQRLEGLAQTLNVVSPLATLGRGYSILLDERGRAIRDAGQTQPGQRLKARLAEGELEVRVEDNHRTPVTLSLLD.

Belongs to the XseA family. In terms of assembly, heterooligomer composed of large and small subunits.

The protein resides in the cytoplasm. The catalysed reaction is Exonucleolytic cleavage in either 5'- to 3'- or 3'- to 5'-direction to yield nucleoside 5'-phosphates.. Functionally, bidirectionally degrades single-stranded DNA into large acid-insoluble oligonucleotides, which are then degraded further into small acid-soluble oligonucleotides. The chain is Exodeoxyribonuclease 7 large subunit from Pseudomonas aeruginosa (strain ATCC 15692 / DSM 22644 / CIP 104116 / JCM 14847 / LMG 12228 / 1C / PRS 101 / PAO1).